A 363-amino-acid chain; its full sequence is UDP-3-O-acylglucosamine N-acyltransferase (363 aa).

H252 acts as the Proton acceptor in catalysis.

The protein belongs to the transferase hexapeptide repeat family. LpxD subfamily. As to quaternary structure, homotrimer.

It catalyses the reaction a UDP-3-O-[(3R)-3-hydroxyacyl]-alpha-D-glucosamine + a (3R)-hydroxyacyl-[ACP] = a UDP-2-N,3-O-bis[(3R)-3-hydroxyacyl]-alpha-D-glucosamine + holo-[ACP] + H(+). It participates in bacterial outer membrane biogenesis; LPS lipid A biosynthesis. In terms of biological role, catalyzes the N-acylation of UDP-3-O-acylglucosamine using 3-hydroxyacyl-ACP as the acyl donor. Is involved in the biosynthesis of lipid A, a phosphorylated glycolipid that anchors the lipopolysaccharide to the outer membrane of the cell. The chain is UDP-3-O-acylglucosamine N-acyltransferase from Cupriavidus taiwanensis (strain DSM 17343 / BCRC 17206 / CCUG 44338 / CIP 107171 / LMG 19424 / R1) (Ralstonia taiwanensis (strain LMG 19424)).